The chain runs to 234 residues: Phosphoribosylaminoimidazole-succinocarboxamide synthase (234 aa).

The protein belongs to the SAICAR synthetase family.

The catalysed reaction is 5-amino-1-(5-phospho-D-ribosyl)imidazole-4-carboxylate + L-aspartate + ATP = (2S)-2-[5-amino-1-(5-phospho-beta-D-ribosyl)imidazole-4-carboxamido]succinate + ADP + phosphate + 2 H(+). It participates in purine metabolism; IMP biosynthesis via de novo pathway; 5-amino-1-(5-phospho-D-ribosyl)imidazole-4-carboxamide from 5-amino-1-(5-phospho-D-ribosyl)imidazole-4-carboxylate: step 1/2. The chain is Phosphoribosylaminoimidazole-succinocarboxamide synthase from Pyrobaculum aerophilum (strain ATCC 51768 / DSM 7523 / JCM 9630 / CIP 104966 / NBRC 100827 / IM2).